The chain runs to 154 residues: MKLLSKIMVIALATSMLQACNGPGGMNKQGTGTLLGGAGGALLGSQFGKGKGQLVGVGVGALLGAVLGGQIGAGMDEQDRRLAELTSQRALETAPSGSNVEWRNPDNGNYGYVTPNKTYRNSTGQYCREYTQTVVIGGKQQKAYGNACLQPDGQ.

A signal peptide spans 1-19; that stretch reads MKLLSKIMVIALATSMLQA. Cys-20 carries N-palmitoyl cysteine lipidation. A lipid anchor (S-diacylglycerol cysteine) is attached at Cys-20.

This sequence belongs to the rickettsiale 17 kDa surface antigen family.

It is found in the cell outer membrane. The sequence is that of 17 kDa surface antigen (omp) from Rickettsia parkeri.